We begin with the raw amino-acid sequence, 230 residues long: 6-carboxyhexanoate--CoA ligase (230 aa).

This sequence belongs to the BioW family. Homodimer. It depends on Mg(2+) as a cofactor.

The catalysed reaction is heptanedioate + ATP + CoA = 6-carboxyhexanoyl-CoA + AMP + diphosphate. Its pathway is metabolic intermediate metabolism; pimeloyl-CoA biosynthesis; pimeloyl-CoA from pimelate: step 1/1. Its function is as follows. Catalyzes the transformation of pimelate into pimeloyl-CoA with concomitant hydrolysis of ATP to AMP. The protein is 6-carboxyhexanoate--CoA ligase of Staphylococcus aureus (strain MRSA252).